We begin with the raw amino-acid sequence, 338 residues long: Probable replication factor C subunit 2 (338 aa).

Gly60–Thr67 is an ATP binding site.

It belongs to the activator 1 small subunits family. As to quaternary structure, heteropentamer of various rfc subunits that forms a complex (RFC) with PCNA in the presence of ATP.

The protein localises to the nucleus. In terms of biological role, the elongation of primed DNA templates by DNA polymerase delta and epsilon requires the action of the accessory proteins PCNA and activator 1. The sequence is that of Probable replication factor C subunit 2 (rfc2) from Dictyostelium discoideum (Social amoeba).